A 487-amino-acid chain; its full sequence is Aspartyl/glutamyl-tRNA(Asn/Gln) amidotransferase subunit B (487 aa).

This sequence belongs to the GatB/GatE family. GatB subfamily. In terms of assembly, heterotrimer of A, B and C subunits.

The catalysed reaction is L-glutamyl-tRNA(Gln) + L-glutamine + ATP + H2O = L-glutaminyl-tRNA(Gln) + L-glutamate + ADP + phosphate + H(+). It carries out the reaction L-aspartyl-tRNA(Asn) + L-glutamine + ATP + H2O = L-asparaginyl-tRNA(Asn) + L-glutamate + ADP + phosphate + 2 H(+). Its function is as follows. Allows the formation of correctly charged Asn-tRNA(Asn) or Gln-tRNA(Gln) through the transamidation of misacylated Asp-tRNA(Asn) or Glu-tRNA(Gln) in organisms which lack either or both of asparaginyl-tRNA or glutaminyl-tRNA synthetases. The reaction takes place in the presence of glutamine and ATP through an activated phospho-Asp-tRNA(Asn) or phospho-Glu-tRNA(Gln). This Chlamydia caviae (strain ATCC VR-813 / DSM 19441 / 03DC25 / GPIC) (Chlamydophila caviae) protein is Aspartyl/glutamyl-tRNA(Asn/Gln) amidotransferase subunit B.